The primary structure comprises 107 residues: Large ribosomal subunit protein mL55 (107 aa).

Residues 1-16 (MLLKQLPQAVQQIRCI) constitute a mitochondrion transit peptide.

The protein belongs to the mitochondrion-specific ribosomal protein mL55 family. As to quaternary structure, component of the mitochondrial ribosome large subunit (39S) which comprises a 16S rRNA and about 50 distinct proteins. In terms of tissue distribution, ubiquitously expressed (at protein level).

It is found in the mitochondrion. Functionally, involved in mitochondrial biogenesis and G2/M phase cell cycle progression. The sequence is that of Large ribosomal subunit protein mL55 (mRpL55) from Drosophila melanogaster (Fruit fly).